The following is a 90-amino-acid chain: Probable Fe(2+)-trafficking protein (90 aa).

Belongs to the Fe(2+)-trafficking protein family. In terms of assembly, monomer.

Could be a mediator in iron transactions between iron acquisition and iron-requiring processes, such as synthesis and/or repair of Fe-S clusters in biosynthetic enzymes. The protein is Probable Fe(2+)-trafficking protein of Hamiltonella defensa subsp. Acyrthosiphon pisum (strain 5AT).